The sequence spans 62 residues: Photosystem II reaction center protein Z (62 aa).

2 consecutive transmembrane segments (helical) span residues 8 to 28 (AVFALIATSSILLISVPVVFA) and 41 to 61 (FSGTSLWIGLVFLVGILNSLI).

Belongs to the PsbZ family. In terms of assembly, PSII is composed of 1 copy each of membrane proteins PsbA, PsbB, PsbC, PsbD, PsbE, PsbF, PsbH, PsbI, PsbJ, PsbK, PsbL, PsbM, PsbT, PsbY, PsbZ, Psb30/Ycf12, at least 3 peripheral proteins of the oxygen-evolving complex and a large number of cofactors. It forms dimeric complexes.

Its subcellular location is the plastid. It localises to the chloroplast thylakoid membrane. Its function is as follows. May control the interaction of photosystem II (PSII) cores with the light-harvesting antenna, regulates electron flow through the 2 photosystem reaction centers. PSII is a light-driven water plastoquinone oxidoreductase, using light energy to abstract electrons from H(2)O, generating a proton gradient subsequently used for ATP formation. The protein is Photosystem II reaction center protein Z of Nymphaea alba (White water-lily).